Consider the following 360-residue polypeptide: Membrane-bound lytic murein transglycosylase C (360 aa).

The N-terminal stretch at 1-16 is a signal peptide; it reads MKKLLALAVIAPLLIS. A lipid anchor (N-palmitoyl cysteine) is attached at Cys-17. The S-diacylglycerol cysteine moiety is linked to residue Cys-17.

Belongs to the transglycosylase Slt family.

It is found in the cell outer membrane. It carries out the reaction Exolytic cleavage of the (1-&gt;4)-beta-glycosidic linkage between N-acetylmuramic acid (MurNAc) and N-acetylglucosamine (GlcNAc) residues in peptidoglycan, from either the reducing or the non-reducing ends of the peptidoglycan chains, with concomitant formation of a 1,6-anhydrobond in the MurNAc residue.. Murein-degrading enzyme. May play a role in recycling of muropeptides during cell elongation and/or cell division. The chain is Membrane-bound lytic murein transglycosylase C from Salmonella arizonae (strain ATCC BAA-731 / CDC346-86 / RSK2980).